The primary structure comprises 663 residues: Probable E3 ubiquitin ligase complex SCF subunit sconB (663 aa).

Polar residues-rich tracts occupy residues 1 to 15 (MDTDNSTLPTEQSAV) and 56 to 77 (TADTPESTASEPRSLFNSTPTE). Positions 1 to 78 (MDTDNSTLPT…SLFNSTPTEG (78 aa)) are disordered. Positions 195–241 (IDFVTALPPEISFKILSYLDTASLCSAAQVSHSWRALADDDVVWHRM) constitute an F-box domain. 4 WD repeats span residues 320-359 (GHTNGVMCLQFDDNILATGSYDATIKIWDIETGKEIRTLR), 361-399 (HESTIRCLQFDDTKLISGSLDRTIKVWNWRSGECISTYT), 400-437 (GHQGGVLCLHFDSTTLASGSKDNTIKIWNFHDKSTRIL), and 439-480 (GHAD…HSYA). Over residues 502-522 (SNCADDRSDRLSGSESPDHRG) the composition is skewed to basic and acidic residues. The segment at 502–547 (SNCADDRSDRLSGSESPDHRGSHGYGSNNAPDQQPNTSAPPTEPMS) is disordered. Residues 526 to 541 (YGSNNAPDQQPNTSAP) show a composition bias toward polar residues. WD repeat units follow at residues 544–589 (EPMS…CLRT), 592–629 (GHIEGVWGLAADTLRFVSGAQDHMAKVWDPRTGTCERT), and 632–663 (GHRGPVTCVSLSDSRMATGSEDSEVRMYSFKA).

This sequence belongs to the WD repeat MET30/SCONB/SCON-2 family. As to quaternary structure, component of the SCF(sconB) E3 ubiquitin ligase complex.

The protein operates within protein modification; protein ubiquitination. Component of the SCF(sconB) E3 ubiquitin ligase complex involved in the regulation of sulfur metabolite repression, probably by mediating the inactivation or degradation of the metR transcription factor. This is Probable E3 ubiquitin ligase complex SCF subunit sconB (sconB) from Trichophyton verrucosum (strain HKI 0517).